Reading from the N-terminus, the 35-residue chain is Coatomer subunit alpha (35 aa).

In terms of assembly, oligomeric complex that consists of at least the alpha, beta, beta', gamma, delta, epsilon and zeta subunits. Interacts with SCYL1. Interacts with JAGN1. Interacts with TMEM41B. Interacts with SVEP1. Probably interacts with PEX11A. Gastric, duodenal and jejunal mucosa. Circulates in the blood. Seems to be confined to specific endocrine cells.

Functionally, xenin stimulates exocrine pancreatic secretion. It inhibits pentagastrin-stimulated secretion of acid, to induce exocrine pancreatic secretion and to affect small and large intestinal motility. In the gut, xenin interacts with the neurotensin receptor. The chain is Coatomer subunit alpha (COPA) from Canis lupus familiaris (Dog).